Reading from the N-terminus, the 523-residue chain is Leucine-rich repeat transmembrane neuronal protein 1 (523 aa).

Positions 1–34 (MDFLLLGLCLHWLLRRPSGVVLCLLGACFQMLPA) are cleaved as a signal peptide. One can recognise an LRRNT domain in the interval 35–63 (APSGCPGQCRCEGRLLYCEALNLTEAPHN). Over 35 to 428 (APSGCPGQCR…HAENAVQIHK (394 aa)) the chain is Extracellular. N-linked (GlcNAc...) asparagine glycans are attached at residues N56 and N63. LRR repeat units lie at residues 64-87 (LSGL…QFTG), 89-111 (MQLT…AFQK), 112-135 (LRRV…TFRP), 136-159 (MPNL…LFHG), 161-183 (RKLT…IFQD), 184-207 (CRSL…SFAG), 209-231 (FKLT…HFPR), 233-255 (ISLN…LDWV), 256-278 (WNLE…VFET), and 280-302 (PYLQ…ILNS). N130 is a glycosylation site (N-linked (GlcNAc...) asparagine). Residues 314 to 365 (NLWDCGRNVCALASWLSNFQGRYDANLQCASPEYAQGEDVLDAVYAFHLCED) form the LRRCT domain. An N-linked (GlcNAc...) asparagine glycan is attached at N381. Residues 429–449 (VVTGTMALIFSFLIVVLVLYV) traverse the membrane as a helical segment. The Cytoplasmic portion of the chain corresponds to 450-523 (SWKCFPASLR…HQQPARECEV (74 aa)). The May be involved in DLG4-binding motif lies at 520–523 (ECEV).

This sequence belongs to the LRRTM family. As to quaternary structure, interacts with DLG4.

The protein localises to the cell membrane. It is found in the postsynaptic cell membrane. Exhibits strong synaptogenic activity, restricted to excitatory presynaptic differentiation, acting at both pre- and postsynaptic level. The chain is Leucine-rich repeat transmembrane neuronal protein 1 (Lrrtm1) from Rattus norvegicus (Rat).